The following is a 402-amino-acid chain: 4-hydroxy-3-methylbut-2-enyl diphosphate reductase (402 aa).

Cysteine 66 lines the [4Fe-4S] cluster pocket. Histidine 96 lines the (2E)-4-hydroxy-3-methylbut-2-enyl diphosphate pocket. Residue histidine 96 coordinates dimethylallyl diphosphate. Residue histidine 96 participates in isopentenyl diphosphate binding. Cysteine 157 provides a ligand contact to [4Fe-4S] cluster. Histidine 185 is a binding site for (2E)-4-hydroxy-3-methylbut-2-enyl diphosphate. Histidine 185 contacts dimethylallyl diphosphate. Residue histidine 185 coordinates isopentenyl diphosphate. Glutamate 187 (proton donor) is an active-site residue. Threonine 250 provides a ligand contact to (2E)-4-hydroxy-3-methylbut-2-enyl diphosphate. Cysteine 288 contributes to the [4Fe-4S] cluster binding site. Residues serine 317, serine 318, asparagine 319, and serine 379 each coordinate (2E)-4-hydroxy-3-methylbut-2-enyl diphosphate. Positions 317, 318, 319, and 379 each coordinate dimethylallyl diphosphate. Residues serine 317, serine 318, asparagine 319, and serine 379 each contribute to the isopentenyl diphosphate site.

The protein belongs to the IspH family. Requires [4Fe-4S] cluster as cofactor.

The enzyme catalyses isopentenyl diphosphate + 2 oxidized [2Fe-2S]-[ferredoxin] + H2O = (2E)-4-hydroxy-3-methylbut-2-enyl diphosphate + 2 reduced [2Fe-2S]-[ferredoxin] + 2 H(+). It catalyses the reaction dimethylallyl diphosphate + 2 oxidized [2Fe-2S]-[ferredoxin] + H2O = (2E)-4-hydroxy-3-methylbut-2-enyl diphosphate + 2 reduced [2Fe-2S]-[ferredoxin] + 2 H(+). Its pathway is isoprenoid biosynthesis; dimethylallyl diphosphate biosynthesis; dimethylallyl diphosphate from (2E)-4-hydroxy-3-methylbutenyl diphosphate: step 1/1. It participates in isoprenoid biosynthesis; isopentenyl diphosphate biosynthesis via DXP pathway; isopentenyl diphosphate from 1-deoxy-D-xylulose 5-phosphate: step 6/6. In terms of biological role, catalyzes the conversion of 1-hydroxy-2-methyl-2-(E)-butenyl 4-diphosphate (HMBPP) into a mixture of isopentenyl diphosphate (IPP) and dimethylallyl diphosphate (DMAPP). Acts in the terminal step of the DOXP/MEP pathway for isoprenoid precursor biosynthesis. In Gloeothece citriformis (strain PCC 7424) (Cyanothece sp. (strain PCC 7424)), this protein is 4-hydroxy-3-methylbut-2-enyl diphosphate reductase.